Here is a 91-residue protein sequence, read N- to C-terminus: uncharacterized protein (91 aa).

The first 18 residues, 1–18, serve as a signal peptide directing secretion; sequence MKVNLILFSLFLLVSIMA. Cys19 is lipidated: N-palmitoyl cysteine. Cys19 is lipidated: S-diacylglycerol cysteine.

The protein localises to the cell membrane. This is an uncharacterized protein from Escherichia coli (strain K12).